The chain runs to 287 residues: ATP synthase gamma chain (287 aa).

It belongs to the ATPase gamma chain family. In terms of assembly, F-type ATPases have 2 components, CF(1) - the catalytic core - and CF(0) - the membrane proton channel. CF(1) has five subunits: alpha(3), beta(3), gamma(1), delta(1), epsilon(1). CF(0) has three main subunits: a, b and c.

The protein localises to the cell membrane. In terms of biological role, produces ATP from ADP in the presence of a proton gradient across the membrane. The gamma chain is believed to be important in regulating ATPase activity and the flow of protons through the CF(0) complex. This Geobacillus stearothermophilus (Bacillus stearothermophilus) protein is ATP synthase gamma chain.